The following is a 203-amino-acid chain: Dephospho-CoA kinase (203 aa).

One can recognise a DPCK domain in the interval 4 to 203 (VIGITGGIAT…EEGYIQSESE (200 aa)). 12 to 17 (ATGKST) contributes to the ATP binding site.

It belongs to the CoaE family.

It localises to the cytoplasm. It catalyses the reaction 3'-dephospho-CoA + ATP = ADP + CoA + H(+). Its pathway is cofactor biosynthesis; coenzyme A biosynthesis; CoA from (R)-pantothenate: step 5/5. Catalyzes the phosphorylation of the 3'-hydroxyl group of dephosphocoenzyme A to form coenzyme A. The polypeptide is Dephospho-CoA kinase (Staphylococcus epidermidis (strain ATCC 12228 / FDA PCI 1200)).